Reading from the N-terminus, the 91-residue chain is Acylphosphatase (91 aa).

The Acylphosphatase-like domain maps to arginine 5–tryptophan 91. Active-site residues include arginine 20 and asparagine 38.

It belongs to the acylphosphatase family.

The enzyme catalyses an acyl phosphate + H2O = a carboxylate + phosphate + H(+). This Haloarcula marismortui (strain ATCC 43049 / DSM 3752 / JCM 8966 / VKM B-1809) (Halobacterium marismortui) protein is Acylphosphatase (acyP).